Here is a 463-residue protein sequence, read N- to C-terminus: Type IV secretion system protein PtlD homolog (463 aa).

The N-terminal stretch at 1–24 (MAGLSRILLSCTLACLLAGQAAQA) is a signal peptide. 5 helical membrane passes run 118 to 138 (LQPL…YALL), 232 to 252 (WLLC…LAAS), 253 to 273 (LLIV…LFLV), 294 to 314 (ALVF…VLAG), and 333 to 353 (MLAA…VPLA). Residues 376–410 (AHRQAAARQYAPRPAAAAAAAGPHQAGTYAASATP) show a composition bias toward low complexity. The segment at 376–463 (AHRQAAARQY…RVLPRKPNLP (88 aa)) is disordered. Pro residues predominate over residues 411–420 (APAPARPAPS). The segment covering 441 to 455 (VRRDDRPAPAPDRRV) has biased composition (basic and acidic residues).

It is found in the cell membrane. This is Type IV secretion system protein PtlD homolog (ptlD) from Bordetella parapertussis (strain 12822 / ATCC BAA-587 / NCTC 13253).